Here is a 362-residue protein sequence, read N- to C-terminus: Replication-associated protein (362 aa).

The region spanning 8–116 (RINAKNYFLT…DGDTLEWGEF (109 aa)) is the CRESS-DNA virus Rep endonuclease domain. Positions 15–18 (FLTY) match the RCR-1 motif. A divalent metal cation contacts are provided by Glu-49, His-57, and His-59. The short motif at 57 to 59 (HLH) is the RCR-2 element. The active-site For DNA cleavage activity is the Tyr-103. The RCR-3 motif lies at 103–106 (YLEK). Residue Asp-107 participates in a divalent metal cation binding. Residues 143–153 (KSEALNVLREL) are binding to RBR1. The oligomerization stretch occupies residues 156–176 (KDYVLQFHNLNSNLDRIFTPP). Residue 221 to 228 (GESRTGKT) participates in ATP binding. A disordered region spans residues 341–362 (YSGTYQGPTQNSEEEVHPEEEN). Acidic residues predominate over residues 352 to 362 (SEEEVHPEEEN).

This sequence belongs to the geminiviridae Rep protein family. Homooligomer. Interacts with the replication enhancer protein (REn). Interacts with host retinoblastoma-related protein 1 (RBR1), and may thereby induce the transcription of host replicative enzymes even if the cell is not dividing anymore. Interacts with host PCNA. Interacts with host SCE1 protein. Binds to host RAD54 protein to ensure geminiviral replication. The cofactor is Mg(2+). Mn(2+) serves as cofactor.

The protein localises to the host nucleus. Essential for the replication of viral ssDNA. The closed circular ssDNA genome is first converted to a superhelical dsDNA. Rep binds a specific region at the genome origin of replication. It introduces an endonucleolytic nick within the conserved sequence 5'-TAATATTAC-3' in the intergenic region of the genome present in all geminiviruses, thereby initiating the rolling circle replication (RCR). Following cleavage, binds covalently to the 5'-phosphate of DNA as a tyrosyl ester. The cleavage gives rise to a free 3'-OH that serves as a primer for the cellular DNA polymerase. The polymerase synthesizes the (+) strand DNA by rolling circle mechanism. After one round of replication, a Rep-catalyzed nucleotidyl transfer reaction releases a circular single-stranded virus genome, thereby terminating the replication. Displays origin-specific DNA cleavage, nucleotidyl transferase, ATPase and helicase activities. The chain is Replication-associated protein from Cynanchum acutum (Little mallow).